A 219-amino-acid polypeptide reads, in one-letter code: MSGSSGPQAQRGPCPFALLLLLLLGPSSVLAISFHLPVNSRKCLREEIHKDLLVTGAYEITDQSGGAGGLRTHLKITDSAGHILYSKEDATKGKFAFTTEDYDMFEVCFESKGTGRIPDQLVILDMKHGVEAKNYEEIAKVEKLKPLEVELRRLEDLSESIVNDFAYMKKREEEMRDTNESTNTRVLYFSIFSMFCLIGLATWQVFYLRRFFKAKKLIE.

The signal sequence occupies residues 1–31 (MSGSSGPQAQRGPCPFALLLLLLLGPSSVLA). The required for interaction with STX17 stretch occupies residues 1 to 142 (MSGSSGPQAQ…KNYEEIAKVE (142 aa)). Over 32–185 (ISFHLPVNSR…RDTNESTNTR (154 aa)) the chain is Lumenal. Residues 41–193 (RKCLREEIHK…TRVLYFSIFS (153 aa)) enclose the GOLD domain. The required for TMED10 and TMED2 cis-Golgi network localization stretch occupies residues 147–178 (LEVELRRLEDLSESIVNDFAYMKKREEEMRDT). 2 positions are modified to dimethylated arginine: Arg-171 and Arg-176. Asn-179 carries an N-linked (GlcNAc...) asparagine glycan. The helical transmembrane segment at 186-206 (VLYFSIFSMFCLIGLATWQVF) threads the bilayer. Residues 204-219 (QVFYLRRFFKAKKLIE) are interaction with COPG1. The Cytoplasmic portion of the chain corresponds to 207–219 (YLRRFFKAKKLIE). The tract at residues 207–219 (YLRRFFKAKKLIE) is interaction with ARF1 and IL1B. Positions 211–212 (FF) match the COPII vesicle coat-binding motif. The short motif at 211–219 (FFKAKKLIE) is the COPI vesicle coat-binding element.

This sequence belongs to the EMP24/GP25L family. As to quaternary structure, predominantly dimeric and to a lesser extent monomeric in the ER. Monomer and dimer in ERGIC and cis-Golgi network. Forms homooligomer (via GOLD domain); the assembly is promoted by direct binding with leaderless cargos and may form a protein channel that facilitates cargo entry into the ERGIC. Forms heterooligomeric complexes with other members of the p24 family such as TMED2, TMED7 and TMED9. Interacts (via GOLD domain) with TMED2 (via GOLD domain); the complex is required for export of TMED10 from the ER to the cis-Golgi network; the complex is proposed to be involved in cis-Golgi network dynamics and / or biogenesis. Associates with the COPI vesicle coat subunits (coatomer). Tetramerization of the cytoplasmic domain at the Golgi membrane in vitro; the complex is proposed to interact with COPI coatomer and induce budding of the vesicles. Interacts with COPG1; the interaction involves TMED10 homodimer. Interacts with ARF1 (GDP-bound); the interaction probably involves a TMED10 oligomer. Interacts with SEC23A, SEC24B, SEC24C and SEC24D components of the coat protein complex II/COPII, indicative of an association of TMED10 with the COPII vesicle coat. Interacts with CD59. Interacts with MPPE1/PGAP5; the complex might recruit and sort GPI-anchored proteins to the ER-exit site, or the interaction might lead to recycling of PGAP5 between the ER and the Golgi. Interacts with F2LR1/PAR2. Interacts with KDELR2/ERD2; the interaction is disrupted by KDELR2 ligand. Found in a complex composed at least of SURF4, TMED2 and TMED10. Associates with the presenilin-dependent gamma-secretase complex. Interacts with STX17; the interaction is direct. Interacts with IL-1; the interaction is direct. Interacts with RAB21 (active GTP-bound form); the interaction is indirect and regulates TMED10 abundance and localization at the Golgi.

It localises to the endoplasmic reticulum membrane. The protein localises to the endoplasmic reticulum-Golgi intermediate compartment membrane. It is found in the golgi apparatus membrane. Its subcellular location is the golgi apparatus. The protein resides in the cis-Golgi network membrane. It localises to the trans-Golgi network membrane. The protein localises to the cytoplasmic vesicle. It is found in the secretory vesicle membrane. Its subcellular location is the cell membrane. The protein resides in the melanosome. Its function is as follows. Cargo receptor involved in protein vesicular trafficking and quality control in the endoplasmic reticulum (ER) and Golgi. The p24 protein family is a group of transmembrane proteins that bind coat protein complex I/COPI and coat protein complex II/COPII involved in vesicular trafficking between the membranes. Acts at the lumenal side for incorporation of secretory cargo molecules into transport vesicles and involved in vesicle coat formation at the cytoplasmic side. Mainly functions in the early secretory pathway and cycles between the ER, ER-Golgi intermediate compartment (ERGIC) and Golgi, mediating cargo transport through COPI and COPII-coated vesicles. In COPII vesicle-mediated anterograde transport, involved in the transport of GPI-anchored proteins by acting together with TMED2 as their cargo receptor; the function specifically implies SEC24C and SEC24D of the COPII vesicle coat and lipid raft-like microdomains of the ER. Recognizes GPI anchors structural remodeled in the ER by the GPI inositol-deacylase/PGAP1 and the metallophosphoesterase MPPE1/PGAP5. In COPI vesicle-mediated retrograde transport, involved in the biogenesis of COPI vesicles and vesicle coat recruitment. Involved in trafficking of amyloid beta A4 protein and soluble APP-beta release (independent from the modulation of gamma-secretase activity). Involved in the KDELR2-mediated retrograde transport of the toxin A subunit (CTX-A-K63)together with COPI and the COOH terminus of KDELR2. On Golgi membranes, acts as a primary receptor for ARF1-GDP, a GTP-binding protein involved in COPI-vesicle formation. Increases coatomer-dependent GTPase-activating activity of ARFGAP2 which mediates the hydrolysis of ARF1-bound GTP and therefore modulates protein trafficking from the Golgi apparatus. Involved in the exocytic trafficking of G protein-coupled receptors F2LR1/PAR2 (trypsin and tryspin-like enzyme receptor), OPRM1 (opioid receptor) and P2RY4 (UTD and UDP receptor) from the Golgi to the plasma membrane, thus contributing to receptor resensitization. In addition to its cargo receptor activity, may also act as a protein channel after oligomerization, facilitating the post-translational entry of leaderless cytoplasmic cargo into the ERGIC. Involved in the translocation into ERGIC, the vesicle entry and the secretion of leaderless cargos (lacking the secretion signal sequence), including the mature form of interleukin 1/IL-1 family members, the alpha-crystallin B chain HSPB5, the carbohydrate-binding proteins galectin-1/LGALS1 and galectin-3/LGALS3, the microtubule-associated protein Tau/MAPT, and the annexin A1/ANXA1; the translocation process is dependent on cargo protein unfolding and enhanced by chaperones HSP90AB1 and HSP90B1/GRP9. Could also associates with the presenilin-dependent gamma-secretase complex in order to regulate gamma-cleavages of the amyloid beta A4 protein to yield amyloid-beta 40/Abeta40. The protein is Transmembrane emp24 domain-containing protein 10 (TMED10) of Bos taurus (Bovine).